A 121-amino-acid chain; its full sequence is Large ribosomal subunit protein uL22c (121 aa).

This sequence belongs to the universal ribosomal protein uL22 family. As to quaternary structure, part of the 50S ribosomal subunit.

The protein localises to the plastid. The protein resides in the chloroplast. Its function is as follows. This protein binds specifically to 23S rRNA. Functionally, the globular domain of the protein is located near the polypeptide exit tunnel on the outside of the subunit, while an extended beta-hairpin is found that lines the wall of the exit tunnel in the center of the 70S ribosome. This chain is Large ribosomal subunit protein uL22c (rpl22), found in Lemna minor (Common duckweed).